Here is a 460-residue protein sequence, read N- to C-terminus: Cyclin-T1-2 (460 aa).

2 disordered regions span residues 1–20 (MDEA…SSVA) and 285–345 (QPIS…QDHS). Residues 314-324 (SDDHSVHDGSR) are compositionally biased toward basic and acidic residues. Residues 332 to 345 (NSESEAQKNLQDHS) are compositionally biased toward polar residues.

This sequence belongs to the cyclin family. Cyclin T subfamily.

This is Cyclin-T1-2 (CYCT1-2) from Arabidopsis thaliana (Mouse-ear cress).